Consider the following 1083-residue polypeptide: MPAMRGLLAPQNTFLDTIATRFDGTHSNFVLGNAQVAGLFPVVYCSDGFCDLTGFSRAEVMQRGCACSFLYGPDTSELVRQQIRKALDEHKEFKAELILYRKSGLPFWCLLDVIPIKNEKGEVALFLVSHKDISETKNRGGPDRWKETGGGRRRYGRARSKGFNANRRRSRAVLYHLSGHLQKQPKGKHKLNKGVFGEKPNLPEYKVAAIRKSPFILLHCGALRATWDGFILLATLYVAVTVPYSVCVSTAREPSAARGPPSVCDLAVEVLFILDIVLNFRTTFVSKSGQVVFAPKSICLHYVTTWFLLDVIAALPFDLLHAFKVNVYFGAHLLKTVRLLRLLRLLPRLDRYSQYSAVVLTLLMAVFALLAHWVACVWFYIGQREIESSESELPEIGWLQELARRLETPYYLVGRRPAGGNSSGQSDNCSSSSEANGTGLELLGGPSLRSAYITSLYFALSSLTSVGFGNVSANTDTEKIFSICTMLIGALMHAVVFGNVTAIIQRMYARRFLYHSRTRDLRDYIRIHRIPKPLKQRMLEYFQATWAVNNGIDTTELLQSLPDELRADIAMHLHKEVLQLPLFEAASRGCLRALSLALRPAFCTPGEYLIHQGDALQALYFVCSGSMEVLKGGTVLAILGKGDLIGCELPRREQVVKANADVKGLTYCVLQCLQLAGLHDSLALYPEFAPRFSRGLRGELSYNLGAGGGSAEVDTSSLSGDNTLMSTLEEKETDGEQGPTVSPAPADEPSSPLLSPGCTSSSSAAKLLSPRRTAPRPRLGGRGRPGRAGALKAEAGPSAPPRALEGLRLPPMPWNVPPDLSPRVVDGIEDGCGSDQPKFSFRVGQSGPECSSSPSPGPESGLLTVPHGPSEARNTDTLDKLRQAVTELSEQVLQMREGLQSLRQAVQLVLAPHREGPCPRASGEGPCPASTSGLLQPLCVDTGASSYCLQPPAGSVLSGTWPHPRPGPPPLMAPWPWGPPASQSSPWPRATAFWTSTSDSEPPASGDLCSEPSTPASPPPSEEGARTGPAEPVSQAEATSTGEPPPGSGGLALPWDPHSLEMVLIGCHGSGTVQWTQEEGTGV.

At 1-228 (MPAMRGLLAP…HCGALRATWD (228 aa)) the chain is on the cytoplasmic side. The PAS domain maps to 18-90 (IATRFDGTHS…QQIRKALDEH (73 aa)). The region spanning 93 to 145 (FKAELILYRKSGLPFWCLLDVIPIKNEKGEVALFLVSHKDISETKNRGGPDRW) is the PAC domain. Positions 137–150 (KNRGGPDRWKETGG) are enriched in basic and acidic residues. The segment at 137–157 (KNRGGPDRWKETGGGRRRYGR) is disordered. Residues 229-249 (GFILLATLYVAVTVPYSVCVS) traverse the membrane as a helical segment. Topologically, residues 250 to 259 (TAREPSAARG) are extracellular. A helical transmembrane segment spans residues 260–280 (PPSVCDLAVEVLFILDIVLNF). Residues 281-302 (RTTFVSKSGQVVFAPKSICLHY) lie on the Cytoplasmic side of the membrane. A helical transmembrane segment spans residues 303 to 323 (VTTWFLLDVIAALPFDLLHAF). Topologically, residues 324-331 (KVNVYFGA) are extracellular. A helical; Voltage-sensor transmembrane segment spans residues 332 to 352 (HLLKTVRLLRLLRLLPRLDRY). Topologically, residues 353–361 (SQYSAVVLT) are cytoplasmic. A helical transmembrane segment spans residues 362-382 (LLMAVFALLAHWVACVWFYIG). The Extracellular portion of the chain corresponds to 383–453 (QREIESSESE…GGPSLRSAYI (71 aa)). Residues Asn421, Asn428, and Asn436 are each glycosylated (N-linked (GlcNAc...) asparagine). Positions 454–474 (TSLYFALSSLTSVGFGNVSAN) form an intramembrane region, pore-forming. The Selectivity filter motif lies at 465-470 (SVGFGN). Residues 475–479 (TDTEK) lie on the Extracellular side of the membrane. A helical transmembrane segment spans residues 480 to 500 (IFSICTMLIGALMHAVVFGNV). Topologically, residues 501–1083 (TAIIQRMYAR…QWTQEEGTGV (583 aa)) are cytoplasmic. An a nucleoside 3',5'-cyclic phosphate-binding site is contributed by 582-697 (LFEAASRGCL…FAPRFSRGLR (116 aa)). Disordered stretches follow at residues 729–810 (EEKE…LRLP), 832–873 (CGSD…SEAR), and 972–1055 (MAPW…ALPW). A compositionally biased stretch (basic residues) spans 773 to 785 (TAPRPRLGGRGRP). The span at 844-861 (GQSGPECSSSPSPGPESG) shows a compositional bias: low complexity.

This sequence belongs to the potassium channel family. H (Eag) (TC 1.A.1.20) subfamily. Kv12.2/KCNH3 sub-subfamily. In terms of assembly, the potassium channel is probably composed of a homo- or heterotetrameric complex of pore-forming alpha subunits that can associate with modulating beta subunits. Interacts with KCNE1 and KCNE3; these interactions regulate KCNH3 trafficking to the plasma membrane and its subsequent voltage-gated potassium channel activity. Post-translationally, N-glycosylated. N-glycosylation mediates traffick to the cell membrane but is not necessary for voltage-gated potassium channel activity. In terms of tissue distribution, detected only in brain, in particular in the telencephalon. Detected in the cerebral cortex, occipital pole, frontal and temporal lobe, putamen, amygdala, hippocampus and caudate nucleus.

The protein localises to the cell membrane. It catalyses the reaction K(+)(in) = K(+)(out). Functionally, pore-forming (alpha) subunit of a voltage-gated inwardly rectifying potassium channel. Charactherized by a fast rate of activation during depolarization followed by a rapid inactivation at much more depolarized value causing inward rectification due to a C-type inactivation mechanism. Exhibits a rapid recovery from inactivation. The protein is Voltage-gated inwardly rectifying potassium channel KCNH3 of Homo sapiens (Human).